The sequence spans 440 residues: DNA dC-&gt;dU-editing enzyme APOBEC-3 (440 aa).

2 CMP/dCMP-type deaminase domains span residues 49–165 (GRKD…AQVA) and 249–368 (EEEF…LCSL). Residue histidine 82 participates in Zn(2+) binding. The active-site Proton donor is the glutamate 84. Zn(2+) contacts are provided by cysteine 116, cysteine 119, histidine 299, cysteine 327, and cysteine 330.

Belongs to the cytidine and deoxycytidylate deaminase family. In terms of assembly, homodimer. Interacts with mouse mammary tumor virus (MMTV) nucleocapsid protein p14. The cofactor is Zn(2+). In terms of tissue distribution, expressed in spleen, node and lung.

It localises to the cytoplasm. The catalysed reaction is a 2'-deoxycytidine in single-stranded DNA + H2O + H(+) = a 2'-deoxyuridine in single-stranded DNA + NH4(+). DNA deaminase (cytidine deaminase) which acts as an inhibitor of retrovirus replication and retrotransposon mobility via deaminase-dependent and -independent mechanisms. Selectively targets single-stranded DNA and does not deaminate double-stranded DNA or single- or double-stranded RNA. Exhibits antiviral activity against HIV-1, simian immunodeficiency viruses (SIVs), mouse mammary tumor virus (MMTV) and friend murine leukemia virus (FrMLV) and may inhibit the mobility of LTR retrotransposons. The sequence is that of DNA dC-&gt;dU-editing enzyme APOBEC-3 (Apobec3) from Mus musculus (Mouse).